The sequence spans 1046 residues: DNA-directed RNA polymerase subunit beta' (1046 aa).

Aspartate 383, aspartate 385, and aspartate 387 together coordinate Mg(2+). 4 residues coordinate Zn(2+): cysteine 752, cysteine 826, cysteine 833, and cysteine 836.

It belongs to the RNA polymerase beta' chain family. The RNAP catalytic core consists of 2 alpha, 1 beta, 1 beta' and 1 omega subunit. When a sigma factor is associated with the core the holoenzyme is formed, which can initiate transcription. It depends on Mg(2+) as a cofactor. Requires Zn(2+) as cofactor.

It carries out the reaction RNA(n) + a ribonucleoside 5'-triphosphate = RNA(n+1) + diphosphate. Functionally, DNA-dependent RNA polymerase catalyzes the transcription of DNA into RNA using the four ribonucleoside triphosphates as substrates. This chain is DNA-directed RNA polymerase subunit beta', found in Weissella hellenica.